We begin with the raw amino-acid sequence, 281 residues long: 4-hydroxy-3-methylbut-2-enyl diphosphate reductase (281 aa).

Cys-12 contacts [4Fe-4S] cluster. Residues His-41 and His-74 each contribute to the (2E)-4-hydroxy-3-methylbut-2-enyl diphosphate site. 2 residues coordinate dimethylallyl diphosphate: His-41 and His-74. His-41 and His-74 together coordinate isopentenyl diphosphate. A [4Fe-4S] cluster-binding site is contributed by Cys-96. His-124 provides a ligand contact to (2E)-4-hydroxy-3-methylbut-2-enyl diphosphate. His-124 serves as a coordination point for dimethylallyl diphosphate. His-124 lines the isopentenyl diphosphate pocket. Glu-126 functions as the Proton donor in the catalytic mechanism. Thr-164 contacts (2E)-4-hydroxy-3-methylbut-2-enyl diphosphate. Cys-193 serves as a coordination point for [4Fe-4S] cluster. (2E)-4-hydroxy-3-methylbut-2-enyl diphosphate is bound by residues Ser-221, Asn-223, and Ser-265. Dimethylallyl diphosphate is bound by residues Ser-221, Asn-223, and Ser-265. Isopentenyl diphosphate-binding residues include Ser-221, Asn-223, and Ser-265.

This sequence belongs to the IspH family. [4Fe-4S] cluster is required as a cofactor.

It catalyses the reaction isopentenyl diphosphate + 2 oxidized [2Fe-2S]-[ferredoxin] + H2O = (2E)-4-hydroxy-3-methylbut-2-enyl diphosphate + 2 reduced [2Fe-2S]-[ferredoxin] + 2 H(+). The enzyme catalyses dimethylallyl diphosphate + 2 oxidized [2Fe-2S]-[ferredoxin] + H2O = (2E)-4-hydroxy-3-methylbut-2-enyl diphosphate + 2 reduced [2Fe-2S]-[ferredoxin] + 2 H(+). Its pathway is isoprenoid biosynthesis; dimethylallyl diphosphate biosynthesis; dimethylallyl diphosphate from (2E)-4-hydroxy-3-methylbutenyl diphosphate: step 1/1. It participates in isoprenoid biosynthesis; isopentenyl diphosphate biosynthesis via DXP pathway; isopentenyl diphosphate from 1-deoxy-D-xylulose 5-phosphate: step 6/6. Catalyzes the conversion of 1-hydroxy-2-methyl-2-(E)-butenyl 4-diphosphate (HMBPP) into a mixture of isopentenyl diphosphate (IPP) and dimethylallyl diphosphate (DMAPP). Acts in the terminal step of the DOXP/MEP pathway for isoprenoid precursor biosynthesis. The chain is 4-hydroxy-3-methylbut-2-enyl diphosphate reductase from Oleidesulfovibrio alaskensis (strain ATCC BAA-1058 / DSM 17464 / G20) (Desulfovibrio alaskensis).